Consider the following 552-residue polypeptide: Phosphoglucomutase (552 aa).

The Phosphoserine intermediate role is filled by Ser-135. Mg(2+) is bound by residues Ser-135, Asp-289, Asp-291, and Asp-293.

The protein belongs to the phosphohexose mutase family. Mg(2+) is required as a cofactor.

The enzyme catalyses alpha-D-glucose 1-phosphate = alpha-D-glucose 6-phosphate. It functions in the pathway glycolipid metabolism; diglucosyl-diacylglycerol biosynthesis. Functionally, catalyzes the interconversion between glucose-6-phosphate and alpha-glucose-1-phosphate. This is the first step in the biosynthesis of diglucosyl-diacylglycerol (Glc2-DAG), i.e. a glycolipid found in the membrane, which is also used as a membrane anchor for lipoteichoic acid (LTA). The polypeptide is Phosphoglucomutase (pgcA) (Staphylococcus saprophyticus subsp. saprophyticus (strain ATCC 15305 / DSM 20229 / NCIMB 8711 / NCTC 7292 / S-41)).